Reading from the N-terminus, the 101-residue chain is Cilia- and flagella-associated protein 141 (101 aa).

Microtubule inner protein component of sperm flagellar doublet microtubules. Expressed in trachea multiciliated cells.

It is found in the cytoplasm. It localises to the cytoskeleton. The protein resides in the cilium axoneme. Its subcellular location is the flagellum axoneme. Microtubule inner protein (MIP) part of the dynein-decorated doublet microtubules (DMTs) in cilia axoneme, which is required for motile cilia beating. The sequence is that of Cilia- and flagella-associated protein 141 from Bos taurus (Bovine).